A 417-amino-acid chain; its full sequence is NADH-quinone oxidoreductase subunit D (417 aa).

This sequence belongs to the complex I 49 kDa subunit family. In terms of assembly, NDH-1 is composed of 14 different subunits. Subunits NuoB, C, D, E, F, and G constitute the peripheral sector of the complex.

The protein resides in the cell inner membrane. The enzyme catalyses a quinone + NADH + 5 H(+)(in) = a quinol + NAD(+) + 4 H(+)(out). Functionally, NDH-1 shuttles electrons from NADH, via FMN and iron-sulfur (Fe-S) centers, to quinones in the respiratory chain. The immediate electron acceptor for the enzyme in this species is believed to be ubiquinone. Couples the redox reaction to proton translocation (for every two electrons transferred, four hydrogen ions are translocated across the cytoplasmic membrane), and thus conserves the redox energy in a proton gradient. This Halorhodospira halophila (strain DSM 244 / SL1) (Ectothiorhodospira halophila (strain DSM 244 / SL1)) protein is NADH-quinone oxidoreductase subunit D.